We begin with the raw amino-acid sequence, 414 residues long: Serine/threonine transporter SstT (414 aa).

Transmembrane regions (helical) follow at residues 16-36, 46-66, 84-104, 143-163, 180-200, 219-239, 300-320, and 332-352; these read GSLV…AWIS, LGTL…LMLV, ILFL…VFSF, ALLN…GFAL, AVTF…FGLV, LVVL…LLVF, MAGA…TLGV, and VVAS…LLLI.

This sequence belongs to the dicarboxylate/amino acid:cation symporter (DAACS) (TC 2.A.23) family.

The protein resides in the cell inner membrane. It catalyses the reaction L-serine(in) + Na(+)(in) = L-serine(out) + Na(+)(out). The catalysed reaction is L-threonine(in) + Na(+)(in) = L-threonine(out) + Na(+)(out). Involved in the import of serine and threonine into the cell, with the concomitant import of sodium (symport system). The protein is Serine/threonine transporter SstT of Salmonella dublin (strain CT_02021853).